Reading from the N-terminus, the 212-residue chain is ATP-dependent dethiobiotin synthetase BioD (212 aa).

Glycine 13–valine 18 lines the ATP pocket. Threonine 17 contributes to the Mg(2+) binding site. The active site involves lysine 33. Serine 37 is a substrate binding site. Mg(2+) is bound at residue glutamate 100. ATP contacts are provided by residues glutamate 100–glycine 103 and proline 184–leucine 186.

The protein belongs to the dethiobiotin synthetase family. Homodimer. Mg(2+) serves as cofactor.

The protein resides in the cytoplasm. It catalyses the reaction (7R,8S)-7,8-diammoniononanoate + CO2 + ATP = (4R,5S)-dethiobiotin + ADP + phosphate + 3 H(+). The protein operates within cofactor biosynthesis; biotin biosynthesis; biotin from 7,8-diaminononanoate: step 1/2. Functionally, catalyzes a mechanistically unusual reaction, the ATP-dependent insertion of CO2 between the N7 and N8 nitrogen atoms of 7,8-diaminopelargonic acid (DAPA, also called 7,8-diammoniononanoate) to form a ureido ring. In Agrobacterium fabrum (strain C58 / ATCC 33970) (Agrobacterium tumefaciens (strain C58)), this protein is ATP-dependent dethiobiotin synthetase BioD.